We begin with the raw amino-acid sequence, 209 residues long: Large ribosomal subunit protein uL3 (209 aa).

Positions His-126–Pro-148 are disordered.

It belongs to the universal ribosomal protein uL3 family. As to quaternary structure, part of the 50S ribosomal subunit. Forms a cluster with proteins L14 and L19.

In terms of biological role, one of the primary rRNA binding proteins, it binds directly near the 3'-end of the 23S rRNA, where it nucleates assembly of the 50S subunit. The polypeptide is Large ribosomal subunit protein uL3 (Listeria innocua serovar 6a (strain ATCC BAA-680 / CLIP 11262)).